The chain runs to 233 residues: 3-dehydroquinate dehydratase (233 aa).

Residues 34-36 (ELR) and Arg64 each bind 3-dehydroquinate. The Proton donor/acceptor role is filled by His118. Lys145 acts as the Schiff-base intermediate with substrate in catalysis. 3 residues coordinate 3-dehydroquinate: Arg185, Ser205, and Gln209.

This sequence belongs to the type-I 3-dehydroquinase family. In terms of assembly, homodimer.

The enzyme catalyses 3-dehydroquinate = 3-dehydroshikimate + H2O. Its pathway is metabolic intermediate biosynthesis; chorismate biosynthesis; chorismate from D-erythrose 4-phosphate and phosphoenolpyruvate: step 3/7. In terms of biological role, involved in the third step of the chorismate pathway, which leads to the biosynthesis of aromatic amino acids. Catalyzes the cis-dehydration of 3-dehydroquinate (DHQ) and introduces the first double bond of the aromatic ring to yield 3-dehydroshikimate. This Coxiella burnetii (strain CbuG_Q212) (Coxiella burnetii (strain Q212)) protein is 3-dehydroquinate dehydratase.